We begin with the raw amino-acid sequence, 167 residues long: Endoribonuclease YbeY (167 aa).

Positions 131, 135, and 141 each coordinate Zn(2+).

It belongs to the endoribonuclease YbeY family. Requires Zn(2+) as cofactor.

The protein localises to the cytoplasm. In terms of biological role, single strand-specific metallo-endoribonuclease involved in late-stage 70S ribosome quality control and in maturation of the 3' terminus of the 16S rRNA. The sequence is that of Endoribonuclease YbeY from Rickettsia rickettsii (strain Sheila Smith).